Consider the following 243-residue polypeptide: Probable transcriptional regulator ycf27 (243 aa).

Residues 7 to 120 (KILVVDDEAS…ELEARIRSVL (114 aa)) form the Response regulatory domain. D56 is modified (4-aspartylphosphate). A DNA-binding region (H-T-H motif) is located at residues 76-94 (DVPIIMLTALGEVCDRITG). The segment at residues 135-236 (SGIISIGFLK…ARGTGYLFQR (102 aa)) is a DNA-binding region (ompR/PhoB-type).

It is found in the plastid. The protein resides in the chloroplast. Functionally, probable promoter-specific protein mediating the interaction between DNA and RNA polymerase. This is Probable transcriptional regulator ycf27 (ycf27) from Porphyra purpurea (Red seaweed).